The primary structure comprises 215 residues: CASP-like protein UU3 (215 aa).

At 1-44 (MATAWESEYFDKVTPGERERAVPPMVPQQTPPPVYIQPQVSRNG) the chain is on the cytoplasmic side. A helical transmembrane segment spans residues 45–65 (IVASIVLRLLTLIFAVVALAV). Residues 66-93 (LASNTGSFQVSTGSATSVKTIKFTILSA) lie on the Extracellular side of the membrane. Residues 94-114 (FTYLFAVCGVVAVYSLLLIIV) form a helical membrane-spanning segment. Over 115–128 (EMIDLAVRGFTTHT) the chain is Cytoplasmic. A helical transmembrane segment spans residues 129–149 (LVAIFVFVLDQTMAYVLISAA). Residues 150-185 (SASANGVKVSRDESNITGYKFDISCSNLGIDDYCTK) lie on the Extracellular side of the membrane. Asn164 carries an N-linked (GlcNAc...) asparagine glycan. Residues 186 to 206 (ASASVAIAFIAFLFMAITAGV) traverse the membrane as a helical segment. Residues 207–215 (SARRLFKLP) are Cytoplasmic-facing.

Belongs to the Casparian strip membrane proteins (CASP) family. Homodimer and heterodimers.

The protein resides in the cell membrane. This Physcomitrium patens (Spreading-leaved earth moss) protein is CASP-like protein UU3.